The following is a 77-amino-acid chain: Acyl carrier protein (77 aa).

The Carrier domain occupies 2–77 (SSIDKRIKEI…DAIDYITDHT (76 aa)). Residue S37 is modified to O-(pantetheine 4'-phosphoryl)serine.

Belongs to the acyl carrier protein (ACP) family. 4'-phosphopantetheine is transferred from CoA to a specific serine of apo-ACP by AcpS. This modification is essential for activity because fatty acids are bound in thioester linkage to the sulfhydryl of the prosthetic group.

It is found in the cytoplasm. The protein operates within lipid metabolism; fatty acid biosynthesis. Functionally, carrier of the growing fatty acid chain in fatty acid biosynthesis. This chain is Acyl carrier protein, found in Geotalea uraniireducens (strain Rf4) (Geobacter uraniireducens).